The following is a 255-amino-acid chain: Putative deoxyribonuclease tatdn3-B (255 aa).

Zn(2+) is bound by residues histidine 11, histidine 13, glutamate 106, histidine 129, histidine 152, and aspartate 199.

The protein belongs to the metallo-dependent hydrolases superfamily. TatD-type hydrolase family. It depends on Mn(2+) as a cofactor. Requires Ca(2+) as cofactor. The cofactor is Mg(2+). Zn(2+) serves as cofactor.

The protein resides in the nucleus. The 3'-exonuclease activity is sensitive to the metal ion present in the active site, whereas the AP endodeoxyribonuclease activity is observed in a variety of divalent metal cofactors. 3'-exoxonuclease activity is suppressed in the presence of Ca(2+), Zn(2+) and Ni(2+). Its function is as follows. Exhibits 3'-exonuclease activities and apurinic/apyrimidinic (AP) endonuclease (in vitro). Show preferential AP endonuclease activity on double-stranded DNA substrates and 3'- exonuclease activity on single-stranded DNA. The sequence is that of Putative deoxyribonuclease tatdn3-B (tatdn3-b) from Xenopus laevis (African clawed frog).